The chain runs to 636 residues: Chaperone protein HtpG (636 aa).

The a; substrate-binding stretch occupies residues 1 to 349; the sequence is MAKHQFQTEV…SEDLPLNVSR (349 aa). Residues 350–562 form a b region; sequence EILQENRILA…ADAQMAAMAH (213 aa). Residues 563–636 form a c region; the sequence is MFRAMGQAMP…RLSRITAKAL (74 aa).

It belongs to the heat shock protein 90 family. As to quaternary structure, homodimer.

The protein resides in the cytoplasm. Its function is as follows. Molecular chaperone. Has ATPase activity. The polypeptide is Chaperone protein HtpG (Aliarcobacter butzleri (strain RM4018) (Arcobacter butzleri)).